The sequence spans 688 residues: Glycine--tRNA ligase beta subunit (688 aa).

It belongs to the class-II aminoacyl-tRNA synthetase family. Tetramer of two alpha and two beta subunits.

It localises to the cytoplasm. The enzyme catalyses tRNA(Gly) + glycine + ATP = glycyl-tRNA(Gly) + AMP + diphosphate. This is Glycine--tRNA ligase beta subunit from Shewanella sp. (strain MR-7).